We begin with the raw amino-acid sequence, 638 residues long: 1,4-alpha-glucan branching enzyme GlgB (638 aa).

Aspartate 303 serves as the catalytic Nucleophile. Glutamate 356 acts as the Proton donor in catalysis.

This sequence belongs to the glycosyl hydrolase 13 family. GlgB subfamily. In terms of assembly, monomer.

It catalyses the reaction Transfers a segment of a (1-&gt;4)-alpha-D-glucan chain to a primary hydroxy group in a similar glucan chain.. It functions in the pathway glycan biosynthesis; glycogen biosynthesis. Functionally, catalyzes the formation of the alpha-1,6-glucosidic linkages in glycogen by scission of a 1,4-alpha-linked oligosaccharide from growing alpha-1,4-glucan chains and the subsequent attachment of the oligosaccharide to the alpha-1,6 position. This is 1,4-alpha-glucan branching enzyme GlgB from Lactobacillus acidophilus (strain ATCC 700396 / NCK56 / N2 / NCFM).